The following is a 403-amino-acid chain: Prostaglandin D2 receptor 2 (403 aa).

The Extracellular portion of the chain corresponds to 1-34; the sequence is MANITLKPLCPLLEEMVQLPNHSNSSLRYIDHVS. N-linked (GlcNAc...) asparagine glycosylation is found at asparagine 3, asparagine 21, and asparagine 24. The helical transmembrane segment at 35 to 55 threads the bilayer; that stretch reads VLLHGLASLLGLVENGLILFV. The Cytoplasmic portion of the chain corresponds to 56 to 71; it reads VGCRMRQTVVTTWVLH. A helical membrane pass occupies residues 72–92; that stretch reads LALSDLLAAASLPFFTYFLAV. Topologically, residues 93-104 are extracellular; sequence GHSWELGTTFCK. The cysteines at positions 103 and 198 are disulfide-linked. A helical transmembrane segment spans residues 105 to 125; sequence LHSSVFFLNMFASGFLLSAIS. The Cytoplasmic portion of the chain corresponds to 126-147; that stretch reads LDRCLQVVRPVWAQNHRTVAAA. The chain crosses the membrane as a helical span at residues 148–168; that stretch reads HRVCLMLWALAVLNTVPYFVF. Topologically, residues 169–209 are extracellular; that stretch reads RDTIPRRDGRIMCYYNMLLLNPGSDRDTTCDYRQKALAVSK. The chain crosses the membrane as a helical span at residues 210-230; it reads FLLAFMVPLAIIASSHVAVSL. The Cytoplasmic segment spans residues 231–245; the sequence is QLHHRGRQRTGRFVR. Residues 246-266 form a helical membrane-spanning segment; that stretch reads LVAAIVVAFILCWGPYHIFSL. The Extracellular portion of the chain corresponds to 267 to 284; sequence LEARAHSVTTLRQLASRG. The chain crosses the membrane as a helical span at residues 285–305; it reads LPFVTSLAFFNSVVNPLLYVL. Over 306–403 the chain is Cytoplasmic; it reads TCPDMLHKLR…KQGSLSCTLD (98 aa). An Involved in the recycling of CRTH2 motif is present at residues 329-332; sequence DSDL. Serine 330 carries the phosphoserine modification. 2 disordered regions span residues 332–353 and 384–403; these read LSTG…STTT and PRRV…CTLD. The segment covering 338-348 has biased composition (basic residues); that stretch reads KRCRRRHRRRA. Residue serine 349 is modified to Phosphoserine. Positions 393 to 403 are enriched in polar residues; it reads EKQGSLSCTLD.

It belongs to the G-protein coupled receptor 1 family. In terms of processing, phosphorylated.

The protein resides in the cell membrane. Its function is as follows. Receptor for prostaglandin D2 (PGD2). Coupled to the G(i)-protein. Receptor activation may result in pertussis toxin-sensitive decreases in cAMP levels and Ca(2+) mobilization. PI3K signaling is also implicated in mediating PTGDR2 effects. PGD2 induced receptor internalization. CRTH2 internalization can be regulated by diverse kinases such as, PKC, PKA, GRK2, GPRK5/GRK5 and GRK6. Receptor activation is responsible, at least in part, in immune regulation and allergic/inflammation responses. The protein is Prostaglandin D2 receptor 2 (Ptgdr2) of Rattus norvegicus (Rat).